Here is a 136-residue protein sequence, read N- to C-terminus: MEETVNNQETPETSEEETADEETVAVENTAAGKVLPSFGPGDTIKVHARIKEGDKERIQMFQGVVLKVKQAADGGNFTVRRISYGVGVERTFPFLSPNVTKVEVIKRGRVRRARLFYLRKLSGKAARIKEVKQTPS.

A disordered region spans residues 1–23; the sequence is MEETVNNQETPETSEEETADEET. Positions 12 to 23 are enriched in acidic residues; it reads ETSEEETADEET.

The protein belongs to the bacterial ribosomal protein bL19 family.

Its function is as follows. This protein is located at the 30S-50S ribosomal subunit interface and may play a role in the structure and function of the aminoacyl-tRNA binding site. This is Large ribosomal subunit protein bL19 from Dehalococcoides mccartyi (strain ATCC BAA-2266 / KCTC 15142 / 195) (Dehalococcoides ethenogenes (strain 195)).